Consider the following 127-residue polypeptide: Photosystem II reaction center Psb28 protein (127 aa).

The segment at 108–127 (LGYSQSQDSDQTEGADNQQA) is disordered. The segment covering 109-127 (GYSQSQDSDQTEGADNQQA) has biased composition (polar residues).

The protein belongs to the Psb28 family. In terms of assembly, part of the photosystem II complex.

It localises to the cellular thylakoid membrane. The chain is Photosystem II reaction center Psb28 protein from Synechococcus sp. (strain CC9605).